The primary structure comprises 348 residues: uncharacterized protein (348 aa).

In terms of biological role, may be involved in apoptosis regulation. This is an uncharacterized protein from Rattus norvegicus (Rat).